Here is a 292-residue protein sequence, read N- to C-terminus: MITGSIVAIVTPMHEDGSLDLNSFRNLLDFHVQEGTDAIVVVGTTGESPTVNVEEHCELIKIAVDHVAGRIPVIAGTGANSTAEAIELTEFAKKAGANMALSVVPYYNKPTQEGLYRHFKAIAEAVELPVILYNVPGRTVADMSNDTILRLAEVPGIVGVKDATGNIDRACDLIARAPKDFALYTGDDMTAVATISLGFHGDISVTANVAPRLMHEMCVAAASGDIAKAREIHFKVLALHRDLFCEANPIPVKWAVHKLGLMPNGIRLPLTTLSEANQPRVLAALRQAGLVA.

Thr-45 lines the pyruvate pocket. Tyr-133 serves as the catalytic Proton donor/acceptor. The active-site Schiff-base intermediate with substrate is the Lys-161. Ile-203 contributes to the pyruvate binding site.

It belongs to the DapA family. In terms of assembly, homotetramer; dimer of dimers.

It is found in the cytoplasm. It carries out the reaction L-aspartate 4-semialdehyde + pyruvate = (2S,4S)-4-hydroxy-2,3,4,5-tetrahydrodipicolinate + H2O + H(+). It participates in amino-acid biosynthesis; L-lysine biosynthesis via DAP pathway; (S)-tetrahydrodipicolinate from L-aspartate: step 3/4. In terms of biological role, catalyzes the condensation of (S)-aspartate-beta-semialdehyde [(S)-ASA] and pyruvate to 4-hydroxy-tetrahydrodipicolinate (HTPA). The polypeptide is 4-hydroxy-tetrahydrodipicolinate synthase (Dechloromonas aromatica (strain RCB)).